The following is a 97-amino-acid chain: Co-chaperonin GroES (97 aa).

The protein belongs to the GroES chaperonin family. As to quaternary structure, heptamer of 7 subunits arranged in a ring. Interacts with the chaperonin GroEL.

The protein resides in the cytoplasm. Its function is as follows. Together with the chaperonin GroEL, plays an essential role in assisting protein folding. The GroEL-GroES system forms a nano-cage that allows encapsulation of the non-native substrate proteins and provides a physical environment optimized to promote and accelerate protein folding. GroES binds to the apical surface of the GroEL ring, thereby capping the opening of the GroEL channel. In Baumannia cicadellinicola subsp. Homalodisca coagulata, this protein is Co-chaperonin GroES.